The sequence spans 335 residues: Phosphate acyltransferase (335 aa).

It belongs to the PlsX family. In terms of assembly, homodimer. Probably interacts with PlsY.

Its subcellular location is the cytoplasm. It catalyses the reaction a fatty acyl-[ACP] + phosphate = an acyl phosphate + holo-[ACP]. The protein operates within lipid metabolism; phospholipid metabolism. Its function is as follows. Catalyzes the reversible formation of acyl-phosphate (acyl-PO(4)) from acyl-[acyl-carrier-protein] (acyl-ACP). This enzyme utilizes acyl-ACP as fatty acyl donor, but not acyl-CoA. In Heliobacterium modesticaldum (strain ATCC 51547 / Ice1), this protein is Phosphate acyltransferase.